We begin with the raw amino-acid sequence, 357 residues long: MAEITAAMVKELRESTGAGMMDCKNALSETNGDFDKAVQLLREKGLGKAAKKADRLAAEGLVSVKVSDDFTSATVSEINSETDFVAKNDQFIALTKDTTAHIQSNSLQSVEELHSSTINGVKFEEYLKSQIATIGENLVVRRFATLKAGANGVVNGYIHTNGRVGVVIAAACDSTEVASKSRDLLRQICMHIAAMRPSYLSYEDLDMTFVENEYKALVAELEKENEERRRLKDPNKPEHKIPQFASRKQLSDAILKEAEEKIKEELKAQGKPEKIWDNIIPGKMNSFIADNSQLDSKLTLMGQFYVLDDKKTVEQVIAEKEKEFGGKIKIVEFICFEVGEGLEKKTEDFAAEVAAQL.

The interval 82-85 (TDFV) is involved in Mg(2+) ion dislocation from EF-Tu.

Belongs to the EF-Ts family.

It is found in the cytoplasm. Associates with the EF-Tu.GDP complex and induces the exchange of GDP to GTP. It remains bound to the aminoacyl-tRNA.EF-Tu.GTP complex up to the GTP hydrolysis stage on the ribosome. This is Elongation factor Ts from Campylobacter jejuni (strain RM1221).